A 678-amino-acid polypeptide reads, in one-letter code: DNA ligase (678 aa).

Residues 36-40 (DAEYD), 85-86 (SL), and E117 each bind NAD(+). K119 functions as the N6-AMP-lysine intermediate in the catalytic mechanism. NAD(+) contacts are provided by R140, E177, K294, and K318. C412, C415, C430, and C436 together coordinate Zn(2+). A BRCT domain is found at 595–678 (ADEQPLNGQT…NLLREHGIEV (84 aa)).

This sequence belongs to the NAD-dependent DNA ligase family. LigA subfamily. Mg(2+) serves as cofactor. Mn(2+) is required as a cofactor.

The enzyme catalyses NAD(+) + (deoxyribonucleotide)n-3'-hydroxyl + 5'-phospho-(deoxyribonucleotide)m = (deoxyribonucleotide)n+m + AMP + beta-nicotinamide D-nucleotide.. In terms of biological role, DNA ligase that catalyzes the formation of phosphodiester linkages between 5'-phosphoryl and 3'-hydroxyl groups in double-stranded DNA using NAD as a coenzyme and as the energy source for the reaction. It is essential for DNA replication and repair of damaged DNA. The protein is DNA ligase of Marinobacter nauticus (strain ATCC 700491 / DSM 11845 / VT8) (Marinobacter aquaeolei).